We begin with the raw amino-acid sequence, 361 residues long: uncharacterized protein (361 aa).

This is an uncharacterized protein from Escherichia coli (strain K12).